The chain runs to 259 residues: Probable ABC transporter permease protein RP096 (259 aa).

5 consecutive transmembrane segments (helical) span residues 13–35 (TIKF…SSII), 49–69 (LFIG…SGAV), 148–168 (VIAA…IGVM), 195–215 (PIDV…ISII), and 237–257 (AVVN…ELFF).

Belongs to the MlaE permease family.

Its subcellular location is the cell inner membrane. In terms of biological role, could be part of an ABC transporter complex. The polypeptide is Probable ABC transporter permease protein RP096 (Rickettsia prowazekii (strain Madrid E)).